We begin with the raw amino-acid sequence, 350 residues long: 3-dehydroquinate synthase (350 aa).

NAD(+) contacts are provided by residues 106 to 110 (GVVGD), 130 to 131 (TS), Lys143, and Lys152. Zn(2+) contacts are provided by Glu185, His246, and His263.

It belongs to the sugar phosphate cyclases superfamily. Dehydroquinate synthase family. NAD(+) serves as cofactor. It depends on Co(2+) as a cofactor. The cofactor is Zn(2+).

It localises to the cytoplasm. The catalysed reaction is 7-phospho-2-dehydro-3-deoxy-D-arabino-heptonate = 3-dehydroquinate + phosphate. Its pathway is metabolic intermediate biosynthesis; chorismate biosynthesis; chorismate from D-erythrose 4-phosphate and phosphoenolpyruvate: step 2/7. Its function is as follows. Catalyzes the conversion of 3-deoxy-D-arabino-heptulosonate 7-phosphate (DAHP) to dehydroquinate (DHQ). The polypeptide is 3-dehydroquinate synthase (Clostridium perfringens (strain 13 / Type A)).